Here is a 318-residue protein sequence, read N- to C-terminus: Cobalamin biosynthesis protein CobD (318 aa).

5 helical membrane-spanning segments follow: residues 51–71, 77–97, 153–173, 206–226, and 296–316; these read VGGV…AWGA, LVHP…CLAA, DGVI…ALAY, LIPA…AGLS, and MYGA…ILTI.

This sequence belongs to the CobD/CbiB family.

The protein localises to the cell membrane. Its pathway is cofactor biosynthesis; adenosylcobalamin biosynthesis. Its function is as follows. Converts cobyric acid to cobinamide by the addition of aminopropanol on the F carboxylic group. The polypeptide is Cobalamin biosynthesis protein CobD (Geobacter metallireducens (strain ATCC 53774 / DSM 7210 / GS-15)).